The following is a 979-amino-acid chain: Putative disease resistance protein RGA1 (979 aa).

Residues 143-437 (GSVLTEPQVY…MAHGFLLSKG (295 aa)) enclose the NB-ARC domain. 182–189 (GMGGLGKT) provides a ligand contact to ATP. LRR repeat units follow at residues 524-547 (FVSLRVLNLRNSNLNQLPSSIGDL), 549-570 (HLRYLDLSGNFRIRNLPKRLCK), 571-594 (LQNLQTLDLHYCDSLSCLPKQTSK), 595-619 (LGSLRNLLLDGCSLTSTPPRIGLLT), 637-661 (LGELKNLNLYGSISITKLDRVKKDT), 748-773 (LPCLESLELHTGSADVEYVEDNVHPG), 823-841 (VKTLKVIVTDATVLRSISN), 842-866 (LRALTSLDISDNVEATSLPEEMFKS), 868-890 (ANLKYLKISFFRNLKELPTSLAS), 891-915 (LNALKSLKFEFCDALESLPEEGVKG), 917-939 (TSLTELSVSNCMMLKCLPEGLQH), and 940-965 (LTALTTLTITQCPIVFKRCERGIGED).

It belongs to the disease resistance NB-LRR family.

Its function is as follows. Disease resistance protein. Resistance proteins guard the plant against pathogens that contain an appropriate avirulence protein via a direct or indirect interaction with this avirulence protein. That triggers a defense system which restricts the pathogen growth. The sequence is that of Putative disease resistance protein RGA1 (RGA1) from Solanum bulbocastanum (Wild potato).